The following is a 171-amino-acid chain: 3-hydroxydecanoyl-[acyl-carrier-protein] dehydratase (171 aa).

His70 is an active-site residue.

Belongs to the thioester dehydratase family. FabA subfamily. As to quaternary structure, homodimer.

It localises to the cytoplasm. It carries out the reaction a (3R)-hydroxyacyl-[ACP] = a (2E)-enoyl-[ACP] + H2O. It catalyses the reaction (3R)-hydroxydecanoyl-[ACP] = (2E)-decenoyl-[ACP] + H2O. The catalysed reaction is (2E)-decenoyl-[ACP] = (3Z)-decenoyl-[ACP]. The protein operates within lipid metabolism; fatty acid biosynthesis. Necessary for the introduction of cis unsaturation into fatty acids. Catalyzes the dehydration of (3R)-3-hydroxydecanoyl-ACP to E-(2)-decenoyl-ACP and then its isomerization to Z-(3)-decenoyl-ACP. Can catalyze the dehydratase reaction for beta-hydroxyacyl-ACPs with saturated chain lengths up to 16:0, being most active on intermediate chain length. The sequence is that of 3-hydroxydecanoyl-[acyl-carrier-protein] dehydratase from Pseudomonas fluorescens (strain ATCC BAA-477 / NRRL B-23932 / Pf-5).